The primary structure comprises 37 residues: Large ribosomal subunit protein bL36 (37 aa).

It belongs to the bacterial ribosomal protein bL36 family.

The sequence is that of Large ribosomal subunit protein bL36 from Pasteurella multocida (strain Pm70).